Consider the following 143-residue polypeptide: Anti-sigma F factor (143 aa).

It belongs to the anti-sigma-factor family.

The catalysed reaction is L-seryl-[protein] + ATP = O-phospho-L-seryl-[protein] + ADP + H(+). The enzyme catalyses L-threonyl-[protein] + ATP = O-phospho-L-threonyl-[protein] + ADP + H(+). Binds to sigma F and blocks its ability to form an RNA polymerase holoenzyme (E-sigma F). Phosphorylates SpoIIAA on a serine residue. This phosphorylation may enable SpoIIAA to act as an anti-anti-sigma factor that counteracts SpoIIAB and thus releases sigma F from inhibition. The polypeptide is Anti-sigma F factor (Clostridium acetobutylicum (strain ATCC 824 / DSM 792 / JCM 1419 / IAM 19013 / LMG 5710 / NBRC 13948 / NRRL B-527 / VKM B-1787 / 2291 / W)).